A 185-amino-acid chain; its full sequence is AP-3 complex subunit sigma (185 aa).

Belongs to the adaptor complexes small subunit family. In terms of assembly, adaptor protein complex 3 (AP-3) is a heterotetramer composed of 2 large adaptins (APL5 and APL6), a medium adaptin (APM3) and a small adaptin (APS3).

It localises to the golgi apparatus. The protein resides in the cytoplasmic vesicle membrane. Its function is as follows. Part of the AP-3 complex, an adaptor-related complex which is not clathrin-associated. The complex is associated with the Golgi region as well as more peripheral structures. It facilitates the budding of vesicles from the Golgi membrane and may be directly involved in trafficking to the vacuole. The protein is AP-3 complex subunit sigma (APS3) of Eremothecium gossypii (strain ATCC 10895 / CBS 109.51 / FGSC 9923 / NRRL Y-1056) (Yeast).